Consider the following 121-residue polypeptide: NAD(P)H-quinone oxidoreductase subunit M (121 aa).

It belongs to the complex I NdhM subunit family. In terms of assembly, NDH-1 can be composed of about 15 different subunits; different subcomplexes with different compositions have been identified which probably have different functions.

The protein resides in the cellular thylakoid membrane. It carries out the reaction a plastoquinone + NADH + (n+1) H(+)(in) = a plastoquinol + NAD(+) + n H(+)(out). The enzyme catalyses a plastoquinone + NADPH + (n+1) H(+)(in) = a plastoquinol + NADP(+) + n H(+)(out). Functionally, NDH-1 shuttles electrons from an unknown electron donor, via FMN and iron-sulfur (Fe-S) centers, to quinones in the respiratory and/or the photosynthetic chain. The immediate electron acceptor for the enzyme in this species is believed to be plastoquinone. Couples the redox reaction to proton translocation, and thus conserves the redox energy in a proton gradient. Cyanobacterial NDH-1 also plays a role in inorganic carbon-concentration. In Nostoc punctiforme (strain ATCC 29133 / PCC 73102), this protein is NAD(P)H-quinone oxidoreductase subunit M.